Here is a 138-residue protein sequence, read N- to C-terminus: 6,7-dimethyl-8-ribityllumazine synthase (138 aa).

5-amino-6-(D-ribitylamino)uracil is bound by residues phenylalanine 13, 45–47 (VFD), and 69–71 (AVI). 74-75 (AT) contributes to the (2S)-2-hydroxy-3-oxobutyl phosphate binding site. Histidine 77 acts as the Proton donor in catalysis. Leucine 102 contacts 5-amino-6-(D-ribitylamino)uracil. (2S)-2-hydroxy-3-oxobutyl phosphate is bound at residue arginine 117.

Belongs to the DMRL synthase family.

The enzyme catalyses (2S)-2-hydroxy-3-oxobutyl phosphate + 5-amino-6-(D-ribitylamino)uracil = 6,7-dimethyl-8-(1-D-ribityl)lumazine + phosphate + 2 H2O + H(+). Its pathway is cofactor biosynthesis; riboflavin biosynthesis; riboflavin from 2-hydroxy-3-oxobutyl phosphate and 5-amino-6-(D-ribitylamino)uracil: step 1/2. Functionally, catalyzes the formation of 6,7-dimethyl-8-ribityllumazine by condensation of 5-amino-6-(D-ribitylamino)uracil with 3,4-dihydroxy-2-butanone 4-phosphate. This is the penultimate step in the biosynthesis of riboflavin. In Methanobrevibacter smithii (strain ATCC 35061 / DSM 861 / OCM 144 / PS), this protein is 6,7-dimethyl-8-ribityllumazine synthase.